The sequence spans 72 residues: Aurein-2.3 (72 aa).

Residues 1–22 (MAFLKKSLFLVLFLGLVSLSIC) form the signal peptide. The propeptide occupies 23 to 49 (EKEKRQNGEDEDENEAANHEEGSEEKR). The tract at residues 27–47 (RQNGEDEDENEAANHEEGSEE) is disordered. Positions 38–47 (AANHEEGSEE) are enriched in basic and acidic residues. Residue L65 is modified to Leucine amide. The propeptide occupies 69-72 (NDVE).

Amidation is essential for antibacterial activity against Gram-positive bacteria. As to expression, expressed by the skin dorsal glands.

Its subcellular location is the secreted. It localises to the target cell membrane. In terms of biological role, amphipathic alpha-helical antimicrobial peptide with weak to moderate activity against Gram-positive bacteria, and no activity against Gram-negative bacteria. Probably acts by disturbing membrane functions with its amphipathic structure. Strongly inhibits the formation of NO by neuronal nitric oxide synthase (nNOS) at micromolar concentrations. Acts by a non-competitive mechanism, probably by binding to calcium/calmodulin and as a consequence blocking calmodulin attachment to nNOS. The protein is Aurein-2.3 of Ranoidea aurea (Green and golden bell frog).